The following is a 349-amino-acid chain: Phenylalanine--tRNA ligase alpha subunit (349 aa).

Glutamate 258 is a Mg(2+) binding site.

Belongs to the class-II aminoacyl-tRNA synthetase family. Phe-tRNA synthetase alpha subunit type 1 subfamily. Tetramer of two alpha and two beta subunits. Mg(2+) is required as a cofactor.

The protein resides in the cytoplasm. The enzyme catalyses tRNA(Phe) + L-phenylalanine + ATP = L-phenylalanyl-tRNA(Phe) + AMP + diphosphate + H(+). The protein is Phenylalanine--tRNA ligase alpha subunit of Rickettsia conorii (strain ATCC VR-613 / Malish 7).